Reading from the N-terminus, the 991-residue chain is Integrator complex subunit 10-like protein (991 aa).

Disordered regions lie at residues 180-217 (NNNN…NNNN), 310-345 (YFDE…DIEK), 462-484 (NDYF…SQES), 549-614 (NSSS…GQQP), and 961-991 (EKQY…EMNE). A compositionally biased stretch (low complexity) spans 319-333 (KQQQQQQQQQQQQEQ). Acidic residues predominate over residues 473-484 (GGDENDENSQES). The span at 549 to 609 (NSSSGSNGII…NNNNNNNNNN (61 aa)) shows a compositional bias: low complexity. Polar residues predominate over residues 964–991 (YSSSNTANNSGVNNSPIHNQNTDVEMNE).

The protein localises to the nucleus. In terms of biological role, may be a component of the Integrator complex, a complex involved in the small nuclear RNAs (snRNA) U1 and U2 transcription and in their 3'-box-dependent processing. This chain is Integrator complex subunit 10-like protein, found in Dictyostelium discoideum (Social amoeba).